Here is a 439-residue protein sequence, read N- to C-terminus: Divalent metal cation transporter MntH 1 (439 aa).

9 consecutive transmembrane segments (helical) span residues 64 to 84, 139 to 161, 171 to 191, 214 to 234, 262 to 282, 300 to 320, 359 to 379, 380 to 400, and 418 to 438; these read FGYA…LLQS, LLGV…VLAL, AIVL…LVLI, PLYL…LYLH, IGSL…AAAA, LLDP…ALLA, LVPA…KLLV, LSQV…IRFS, and LAWS…YFWF.

It belongs to the NRAMP family.

Its subcellular location is the cell inner membrane. Functionally, h(+)-stimulated, divalent metal cation uptake system. This chain is Divalent metal cation transporter MntH 1, found in Pseudomonas aeruginosa (strain ATCC 15692 / DSM 22644 / CIP 104116 / JCM 14847 / LMG 12228 / 1C / PRS 101 / PAO1).